Consider the following 306-residue polypeptide: Glutamyl-Q tRNA(Asp) synthetase (306 aa).

Residues 4–8 and Glu-40 contribute to the L-glutamate site; that span reads RYAPS. A 'HIGH' region motif is present at residues 7 to 17; it reads PSPSGDLHFGN. Residues Cys-92, Cys-94, Tyr-113, and Cys-117 each coordinate Zn(2+). Residues Tyr-180 and Arg-198 each contribute to the L-glutamate site. The short motif at 236 to 240 is the 'KMSKS' region element; the sequence is RLAKR. Lys-239 lines the ATP pocket.

It belongs to the class-I aminoacyl-tRNA synthetase family. GluQ subfamily. It depends on Zn(2+) as a cofactor.

Its function is as follows. Catalyzes the tRNA-independent activation of glutamate in presence of ATP and the subsequent transfer of glutamate onto a tRNA(Asp). Glutamate is transferred on the 2-amino-5-(4,5-dihydroxy-2-cyclopenten-1-yl) moiety of the queuosine in the wobble position of the QUC anticodon. The chain is Glutamyl-Q tRNA(Asp) synthetase from Corynebacterium efficiens (strain DSM 44549 / YS-314 / AJ 12310 / JCM 11189 / NBRC 100395).